Here is a 303-residue protein sequence, read N- to C-terminus: Glutaminase (303 aa).

The substrate site is built by serine 61, asparagine 111, glutamate 155, asparagine 162, tyrosine 186, tyrosine 238, and valine 256.

It belongs to the glutaminase family. As to quaternary structure, homotetramer.

The enzyme catalyses L-glutamine + H2O = L-glutamate + NH4(+). This chain is Glutaminase, found in Marinomonas sp. (strain MWYL1).